Reading from the N-terminus, the 367-residue chain is Protein RecA (367 aa).

73 to 80 (GPESSGKT) lines the ATP pocket.

The protein belongs to the RecA family.

It is found in the cytoplasm. Can catalyze the hydrolysis of ATP in the presence of single-stranded DNA, the ATP-dependent uptake of single-stranded DNA by duplex DNA, and the ATP-dependent hybridization of homologous single-stranded DNAs. It interacts with LexA causing its activation and leading to its autocatalytic cleavage. The protein is Protein RecA of Delftia acidovorans (strain DSM 14801 / SPH-1).